We begin with the raw amino-acid sequence, 184 residues long: Ribosome-recycling factor (184 aa).

The protein belongs to the RRF family.

The protein localises to the cytoplasm. In terms of biological role, responsible for the release of ribosomes from messenger RNA at the termination of protein biosynthesis. May increase the efficiency of translation by recycling ribosomes from one round of translation to another. This is Ribosome-recycling factor from Bifidobacterium animalis subsp. lactis (strain AD011).